Consider the following 556-residue polypeptide: 2-succinyl-5-enolpyruvyl-6-hydroxy-3-cyclohexene-1-carboxylate synthase (556 aa).

Belongs to the TPP enzyme family. MenD subfamily. In terms of assembly, homodimer. The cofactor is Mg(2+). Mn(2+) is required as a cofactor. Requires thiamine diphosphate as cofactor.

The enzyme catalyses isochorismate + 2-oxoglutarate + H(+) = 5-enolpyruvoyl-6-hydroxy-2-succinyl-cyclohex-3-ene-1-carboxylate + CO2. It functions in the pathway quinol/quinone metabolism; 1,4-dihydroxy-2-naphthoate biosynthesis; 1,4-dihydroxy-2-naphthoate from chorismate: step 2/7. Its pathway is quinol/quinone metabolism; menaquinone biosynthesis. Its function is as follows. Catalyzes the thiamine diphosphate-dependent decarboxylation of 2-oxoglutarate and the subsequent addition of the resulting succinic semialdehyde-thiamine pyrophosphate anion to isochorismate to yield 2-succinyl-5-enolpyruvyl-6-hydroxy-3-cyclohexene-1-carboxylate (SEPHCHC). This chain is 2-succinyl-5-enolpyruvyl-6-hydroxy-3-cyclohexene-1-carboxylate synthase, found in Escherichia coli O45:K1 (strain S88 / ExPEC).